Here is a 147-residue protein sequence, read N- to C-terminus: Phosphoribosyl-AMP cyclohydrolase 2 (147 aa).

Asp99 serves as a coordination point for Mg(2+). Cys100 contacts Zn(2+). Mg(2+) is bound by residues Asp101 and Asp103. Cys116 and Cys123 together coordinate Zn(2+).

The protein belongs to the PRA-CH family. As to quaternary structure, homodimer. Requires Mg(2+) as cofactor. The cofactor is Zn(2+).

It is found in the cytoplasm. It catalyses the reaction 1-(5-phospho-beta-D-ribosyl)-5'-AMP + H2O = 1-(5-phospho-beta-D-ribosyl)-5-[(5-phospho-beta-D-ribosylamino)methylideneamino]imidazole-4-carboxamide. It participates in amino-acid biosynthesis; L-histidine biosynthesis; L-histidine from 5-phospho-alpha-D-ribose 1-diphosphate: step 3/9. Its function is as follows. Catalyzes the hydrolysis of the adenine ring of phosphoribosyl-AMP. This is Phosphoribosyl-AMP cyclohydrolase 2 from Pseudomonas fluorescens (strain ATCC BAA-477 / NRRL B-23932 / Pf-5).